Consider the following 114-residue polypeptide: Hemerythrin subunit 2 (114 aa).

Residues His-26, His-55, Glu-59, His-74, His-78, His-102, and Asp-107 each coordinate Fe cation.

This sequence belongs to the hemerythrin family.

Functionally, hemerythrin is a respiratory protein in blood cells of certain marine worms. The oxygen-binding site in each chain contains two iron atoms. The chain is Hemerythrin subunit 2 from Golfingia vulgaris (Marine worm).